The primary structure comprises 267 residues: MVKVAVCGAAGRMGQRIIVAITEAEGAELSGALERPGHPLVGQDAGILAGCGELKVKISDDINAVVEGCDVLIDFTTPKVSLKNLEACALKKKSIVIGSTGFTPEERVLAAELARDIPAVLAPNMSVGVNVCFKVLKDVAKTLGDDFDVEIVELHHNKKKDAPSGTAVRMGEVVAEALGRDYNKVANYHREGICGERTKEEIGMQTVRGGDIIGEHTVYFIGMGERIEISHRAMTRDMFSRGSVRAAKWVVGKKPGLYDMQDVLGLK.

NAD(+)-binding positions include Gly8–Met13 and Glu34. Arg35 is a binding site for NADP(+). Residues Gly98 to Thr100 and Ala122 to Met125 contribute to the NAD(+) site. Catalysis depends on His155, which acts as the Proton donor/acceptor. His156 provides a ligand contact to (S)-2,3,4,5-tetrahydrodipicolinate. Residue Lys159 is the Proton donor of the active site. Gly165–Thr166 provides a ligand contact to (S)-2,3,4,5-tetrahydrodipicolinate.

It belongs to the DapB family.

The protein localises to the cytoplasm. The catalysed reaction is (S)-2,3,4,5-tetrahydrodipicolinate + NAD(+) + H2O = (2S,4S)-4-hydroxy-2,3,4,5-tetrahydrodipicolinate + NADH + H(+). It carries out the reaction (S)-2,3,4,5-tetrahydrodipicolinate + NADP(+) + H2O = (2S,4S)-4-hydroxy-2,3,4,5-tetrahydrodipicolinate + NADPH + H(+). It participates in amino-acid biosynthesis; L-lysine biosynthesis via DAP pathway; (S)-tetrahydrodipicolinate from L-aspartate: step 4/4. Functionally, catalyzes the conversion of 4-hydroxy-tetrahydrodipicolinate (HTPA) to tetrahydrodipicolinate. The polypeptide is 4-hydroxy-tetrahydrodipicolinate reductase (Geotalea daltonii (strain DSM 22248 / JCM 15807 / FRC-32) (Geobacter daltonii)).